The following is a 368-amino-acid chain: Germination protease (368 aa).

The propeptide occupies 1-16 (MKNNELDVNQFLIRTD).

Belongs to the peptidase A25 family. In terms of assembly, homotetramer. Autoproteolytically processed. The inactive tetrameric zymogen termed p46 autoprocesses to a smaller form termed p41, which is active only during spore germination.

It catalyses the reaction Endopeptidase action with P4 Glu or Asp, P1 preferably Glu &gt; Asp, P1' hydrophobic and P2' Ala.. In terms of biological role, initiates the rapid degradation of small, acid-soluble proteins during spore germination. In Bacillus velezensis (strain DSM 23117 / BGSC 10A6 / LMG 26770 / FZB42) (Bacillus amyloliquefaciens subsp. plantarum), this protein is Germination protease.